Here is a 296-residue protein sequence, read N- to C-terminus: Guided entry of tail-anchored proteins factor CAMLG (296 aa).

A disordered region spans residues 1 to 79; that stretch reads MESMAVATDG…SDKLNSLSVP (79 aa). Topologically, residues 1–189 are cytoplasmic; the sequence is MESMAVATDG…NTTEEFDSFR (189 aa). S55 is modified (phosphoserine). Positions 61 to 72 are enriched in basic and acidic residues; sequence SQTKSKQQDSDK. The chain crosses the membrane as a helical span at residues 190 to 207; sequence IFRLVGCALLALGVRAFV. Residues 208–212 are Lumenal-facing; it reads CKYLS. An intrachain disulfide couples C208 to C284. A helical transmembrane segment spans residues 213 to 231; that stretch reads IFAPFLTLQLAYMGLYKYF. The Cytoplasmic portion of the chain corresponds to 232 to 269; sequence PKSEKKIKTTVLTAALLLSGIPAEVINRSMDTYSKMGE. The chain crosses the membrane as a helical span at residues 270-288; that stretch reads VFTDLCVYFFTFIFCHELL. The Lumenal segment spans residues 289-296; that stretch reads DYWGSEVP.

Component of the Golgi to ER traffic (GET) complex, which is composed of GET1/WRB, CAMLG/GET2 and GET3/TRC40. Within the complex, GET1 and CAMLG form a heterotetramer which is stabilized by phosphatidylinositol binding and which binds to the GET3 homodimer. Interacts (via C-terminus) with GET1. Interacts (via N-terminus) with GET3. GET3 shows a higher affinity for CAMLG than for GET1. Interacts (via N-terminus) with TNFRSF13B/TACI (via C-terminus). As to quaternary structure, (Microbial infection) Interacts with human herpes virus 8/HHV-8 protein K7; this interaction modulates intracellular calcium concentration. Ubiquitous. Highest levels in brain, testis and ovary.

The protein resides in the endoplasmic reticulum membrane. Its function is as follows. Required for the post-translational delivery of tail-anchored (TA) proteins to the endoplasmic reticulum. Together with GET1/WRB, acts as a membrane receptor for soluble GET3/TRC40, which recognizes and selectively binds the transmembrane domain of TA proteins in the cytosol. Required for the stability of GET1. Stimulates calcium signaling in T cells through its involvement in elevation of intracellular calcium. Essential for the survival of peripheral follicular B cells. The polypeptide is Guided entry of tail-anchored proteins factor CAMLG (Homo sapiens (Human)).